The primary structure comprises 147 residues: Transcriptional regulator FurA (147 aa).

A DNA-binding region spans residues 1 to 85; the sequence is MSSIPDYAEQ…GSVARYESRV (85 aa). Zn(2+)-binding residues include His-34 and Glu-82. Residues 86 to 147 form a dimerization region; it reads GDNHHHIVCR…SISDTSRSHP (62 aa). Fe cation contacts are provided by Asp-87 and His-89. Positions 91, 94, 97, and 102 each coordinate Zn(2+). Position 109 (Glu-109) interacts with Fe cation.

It belongs to the Fur family. As to quaternary structure, homodimer.

Its subcellular location is the cytoplasm. In terms of biological role, represses transcription of the catalase-peroxidase gene katG and its own transcription by binding to the promoter region in a redox-dependent manner. This chain is Transcriptional regulator FurA (furA), found in Mycobacterium bovis (strain ATCC BAA-935 / AF2122/97).